Here is a 158-residue protein sequence, read N- to C-terminus: 6,7-dimethyl-8-ribityllumazine synthase (158 aa).

Residues Phe22, 57-59 (AVE), and 81-83 (AVI) contribute to the 5-amino-6-(D-ribitylamino)uracil site. 86–87 (GT) lines the (2S)-2-hydroxy-3-oxobutyl phosphate pocket. His89 (proton donor) is an active-site residue. Residue Phe114 coordinates 5-amino-6-(D-ribitylamino)uracil. Arg128 is a (2S)-2-hydroxy-3-oxobutyl phosphate binding site.

This sequence belongs to the DMRL synthase family. In terms of assembly, forms an icosahedral capsid composed of 60 subunits, arranged as a dodecamer of pentamers.

It catalyses the reaction (2S)-2-hydroxy-3-oxobutyl phosphate + 5-amino-6-(D-ribitylamino)uracil = 6,7-dimethyl-8-(1-D-ribityl)lumazine + phosphate + 2 H2O + H(+). It functions in the pathway cofactor biosynthesis; riboflavin biosynthesis; riboflavin from 2-hydroxy-3-oxobutyl phosphate and 5-amino-6-(D-ribitylamino)uracil: step 1/2. Functionally, catalyzes the formation of 6,7-dimethyl-8-ribityllumazine by condensation of 5-amino-6-(D-ribitylamino)uracil with 3,4-dihydroxy-2-butanone 4-phosphate. This is the penultimate step in the biosynthesis of riboflavin. The protein is 6,7-dimethyl-8-ribityllumazine synthase of Shewanella frigidimarina (strain NCIMB 400).